The sequence spans 304 residues: Glycine--tRNA ligase alpha subunit (304 aa).

This sequence belongs to the class-II aminoacyl-tRNA synthetase family. In terms of assembly, tetramer of two alpha and two beta subunits.

The protein resides in the cytoplasm. The catalysed reaction is tRNA(Gly) + glycine + ATP = glycyl-tRNA(Gly) + AMP + diphosphate. This is Glycine--tRNA ligase alpha subunit from Streptococcus agalactiae serotype III (strain NEM316).